The chain runs to 529 residues: Tyrosine-protein kinase Fgr (529 aa).

The N-myristoyl glycine moiety is linked to residue Gly-2. 2 S-palmitoyl cysteine lipidation sites follow: Cys-3 and Cys-6. Residue Tyr-34 is modified to Phosphotyrosine. The region spanning 77–138 (IGVTLFIALY…PSNYVAPVDS (62 aa)) is the SH3 domain. The SH2 domain occupies 144–241 (WYFGKIGRKD…GLCNLLIAPC (98 aa)). Residue Tyr-208 is modified to Phosphotyrosine. Residue Ser-218 is modified to Phosphoserine. Residues 263–516 (ITLERRLGTG…YLQSFLEDYF (254 aa)) form the Protein kinase domain. ATP is bound by residues 269–277 (LGTGCFGDV) and Lys-291. Asp-382 functions as the Proton acceptor in the catalytic mechanism. The residue at position 412 (Tyr-412) is a Phosphotyrosine. The residue at position 523 (Tyr-523) is a Phosphotyrosine; by SRC.

It belongs to the protein kinase superfamily. Tyr protein kinase family. SRC subfamily. Interacts with ITGB1, ITGB2, MS4A2/FCER1B, FCER1G, FCGR2A and/or FCGR2B. Interacts (via SH2 domain) with SYK (tyrosine phosphorylated). Interacts (via SH2 domain) with FLT3 (tyrosine phosphorylated). Interacts with PTK2/FAK1. Interacts (via SH2 domain) with HCLS1 (tyrosine phosphorylated by SYK). Interacts with SIRPA and PTPNS1. Interacts (not phosphorylated on tyrosine residues) with CBL; FGR tyrosine phosphorylation promotes dissociation. Interacts with PIK3R1 and FASLG. Interacts with CLNK. Ubiquitinated. Becomes ubiquitinated in response to ITGB2 signaling; this does not lead to degradation. Post-translationally, phosphorylated. Autophosphorylated on tyrosine residues. Becomes phosphorylated in response to FCGR2A and/or FCGR2B engagement, cell adhesion and signaling by ITGB2. Prior phosphorylation at Tyr-523 by SRC inhibits ulterior autophosphorylation at Tyr-412. Detected in neutrophils, monocytes and natural killer cells (at protein level). Detected in monocytes and large lymphocytes.

It localises to the cell membrane. It is found in the cell projection. Its subcellular location is the ruffle membrane. The protein localises to the cytoplasm. The protein resides in the cytosol. It localises to the cytoskeleton. It is found in the mitochondrion inner membrane. Its subcellular location is the mitochondrion intermembrane space. It catalyses the reaction L-tyrosyl-[protein] + ATP = O-phospho-L-tyrosyl-[protein] + ADP + H(+). Its activity is regulated as follows. Activated by autophosphorylation. Prior phosphorylation at Tyr-523 by SRC inhibits ulterior autophosphorylation at Tyr-412. Activated by phorbol myristate acetate, phosphatidic acid and poly-Lys. Binding (via SH2 domain) of HCLS1 that is already phosphorylated by SYK strongly increases kinase activity. Functionally, non-receptor tyrosine-protein kinase that transmits signals from cell surface receptors devoid of kinase activity and contributes to the regulation of immune responses, including neutrophil, monocyte, macrophage and mast cell functions, cytoskeleton remodeling in response to extracellular stimuli, phagocytosis, cell adhesion and migration. Promotes mast cell degranulation, release of inflammatory cytokines and IgE-mediated anaphylaxis. Acts downstream of receptors that bind the Fc region of immunoglobulins, such as MS4A2/FCER1B, FCGR2A and/or FCGR2B. Acts downstream of ITGB1 and ITGB2, and regulates actin cytoskeleton reorganization, cell spreading and adhesion. Depending on the context, activates or inhibits cellular responses. Functions as a negative regulator of ITGB2 signaling, phagocytosis and SYK activity in monocytes. Required for normal ITGB1 and ITGB2 signaling, normal cell spreading and adhesion in neutrophils and macrophages. Functions as a positive regulator of cell migration and regulates cytoskeleton reorganization via RAC1 activation. Phosphorylates SYK (in vitro) and promotes SYK-dependent activation of AKT1 and MAP kinase signaling. Phosphorylates PLD2 in antigen-stimulated mast cells, leading to PLD2 activation and the production of the signaling molecules lysophosphatidic acid and diacylglycerol. Promotes activation of PIK3R1. Phosphorylates FASLG, and thereby regulates its ubiquitination and subsequent internalization. Phosphorylates ABL1. Promotes phosphorylation of CBL, CTTN, PIK3R1, PTK2/FAK1, PTK2B/PYK2 and VAV2. Phosphorylates HCLS1 that has already been phosphorylated by SYK, but not unphosphorylated HCLS1. Together with CLNK, it acts as a negative regulator of natural killer cell-activating receptors and inhibits interferon-gamma production. The protein is Tyrosine-protein kinase Fgr (FGR) of Homo sapiens (Human).